The sequence spans 428 residues: MMKLIKYPSKEQWAELLKRPALNTESLFDTVRTIINKVRAEGDKAVLEYEAAFDKVTLSALTVTSEEIQKAEGLISDELKSAITLAKRNIETFHSSQRFVGKKVETMEGVTCWQKAVGIEKVGLYIPGGTAPLFSTVLMLAVPAKIAGCREIVLCTPPDKNGNIHPAILFAAQLAGVSKIFKAGGVQAIAAMAYGTESVPKVYKIFGPGNQYVTAAKQLVSLRDVAIDMPAGPSEVEVLADASANPVFVAADLLSQAEHGVDSQAMLITTSEKLQAEVMEEVNRQLAKLPRREIAAKSLENSKLILVKDMDEALELTNAYAPEHLIVETENYLEVAERVINAGSVFLGSLTPESAGDYASGTNHTLPTNGYAKAYSGVSLDSFIRKITFQEILPQGMKVIGPAIEEMAANELLDAHKNAVTVRLNTLK.

NAD(+)-binding residues include Tyr-125, Gln-187, and Asn-210. The substrate site is built by Ser-234, Gln-256, and His-259. 2 residues coordinate Zn(2+): Gln-256 and His-259. Active-site proton acceptor residues include Glu-323 and His-324. Substrate-binding residues include His-324, Asp-357, Glu-411, and His-416. Asp-357 contacts Zn(2+). Residue His-416 participates in Zn(2+) binding.

It belongs to the histidinol dehydrogenase family. Zn(2+) is required as a cofactor.

The catalysed reaction is L-histidinol + 2 NAD(+) + H2O = L-histidine + 2 NADH + 3 H(+). It functions in the pathway amino-acid biosynthesis; L-histidine biosynthesis; L-histidine from 5-phospho-alpha-D-ribose 1-diphosphate: step 9/9. In terms of biological role, catalyzes the sequential NAD-dependent oxidations of L-histidinol to L-histidinaldehyde and then to L-histidine. In Bacteroides thetaiotaomicron (strain ATCC 29148 / DSM 2079 / JCM 5827 / CCUG 10774 / NCTC 10582 / VPI-5482 / E50), this protein is Histidinol dehydrogenase.